A 207-amino-acid chain; its full sequence is Small ribosomal subunit protein uS4 (207 aa).

Positions Lys-31 to Gln-40 are enriched in basic and acidic residues. Positions Lys-31–Leu-56 are disordered. A compositionally biased stretch (polar residues) spans Gly-42–Gly-53. In terms of domain architecture, S4 RNA-binding spans Ser-97–Glu-158.

This sequence belongs to the universal ribosomal protein uS4 family. In terms of assembly, part of the 30S ribosomal subunit. Contacts protein S5. The interaction surface between S4 and S5 is involved in control of translational fidelity.

One of the primary rRNA binding proteins, it binds directly to 16S rRNA where it nucleates assembly of the body of the 30S subunit. Functionally, with S5 and S12 plays an important role in translational accuracy. In Polynucleobacter necessarius subsp. necessarius (strain STIR1), this protein is Small ribosomal subunit protein uS4.